The chain runs to 875 residues: Neurotrypsin (875 aa).

An N-terminal signal peptide occupies residues 1-20 (MTLARFVLALVLGALPEVVX). Residue N26 is glycosylated (N-linked (GlcNAc...) asparagine). The disordered stretch occupies residues 31–88 (HRPRHSPPTGPHYPYYLPTQQRPPRTRPPPPLPRFPRPPRALPAQRPHALQAGHTPRP). Over residues 56–71 (TRPPPPLPRFPRPPRA) the composition is skewed to pro residues. Residues 93–165 (CPAGEPWVSV…GKVDWGYCDC (73 aa)) enclose the Kringle domain. 20 disulfides stabilise this stretch: C93–C165, C109–C149, C138–C163, C195–C259, C208–C269, C239–C249, C305–C369, C318–C379, C349–C359, C412–C475, C425–C485, C455–C465, C525–C589, C538–C599, C569–C579, C619–C750, C661–C677, C765–C831, C794–C808, and C821–C850. SRCR domains follow at residues 170–271 (IRLR…TCSF), 280–381 (IRLV…SCTP), 387–487 (IRLA…ACYP), and 500–601 (VRLM…ICDY). Residues 619 to 630 (CGLRLLHRRQKR) form a zymogen activation region region. Residues 631–874 (IIGGKNSLRG…FVPWIKSVTK (244 aa)) enclose the Peptidase S1 domain. The Charge relay system role is filled by H676. N683 is a glycosylation site (N-linked (GlcNAc...) asparagine). The Charge relay system role is filled by D726. Catalysis depends on S825, which acts as the Charge relay system.

It belongs to the peptidase S1 family.

It localises to the secreted. Its function is as follows. Plays a role in neuronal plasticity and the proteolytic action may subserve structural reorganizations associated with learning and memory operations. In Nomascus leucogenys (Northern white-cheeked gibbon), this protein is Neurotrypsin (PRSS12).